Consider the following 187-residue polypeptide: MPVKEQGFSLLEVLIAMAISSVLLLGAARFLPALQRESLTSTRKLALEDEIWLRVFTVAKHLQRAGYCHGICTGEGLEIVGQGDCVIVQWDANSNGIWDREPVKESDQIGFRLKEHVLETLRGATSCEGKGWDKVTNPDAIIIDTFQVVRQDVSGFSPVLTVNMRAASKSEPQTVVNASYSVTGFNL.

The propeptide at 1 to 7 (MPVKEQG) is leader sequence. F8 carries the N-methylphenylalanine modification. Residues 8–28 (FSLLEVLIAMAISSVLLLGAA) form a helical membrane-spanning segment.

It is found in the membrane. Functionally, not yet known. This Escherichia coli (strain K12) protein is Prepilin peptidase-dependent protein B (ppdB).